A 160-amino-acid chain; its full sequence is Phosphopantetheine adenylyltransferase (160 aa).

Thr9 contributes to the substrate binding site. ATP-binding positions include 9-10 (TF) and His17. Substrate contacts are provided by Lys41, Leu73, and Arg87. ATP contacts are provided by residues 88-90 (GLR), Glu98, and 123-129 (YSFISST).

It belongs to the bacterial CoaD family. In terms of assembly, homohexamer. The cofactor is Mg(2+).

The protein localises to the cytoplasm. It catalyses the reaction (R)-4'-phosphopantetheine + ATP + H(+) = 3'-dephospho-CoA + diphosphate. Its pathway is cofactor biosynthesis; coenzyme A biosynthesis; CoA from (R)-pantothenate: step 4/5. In terms of biological role, reversibly transfers an adenylyl group from ATP to 4'-phosphopantetheine, yielding dephospho-CoA (dPCoA) and pyrophosphate. This is Phosphopantetheine adenylyltransferase from Ectopseudomonas mendocina (strain ymp) (Pseudomonas mendocina).